The primary structure comprises 768 residues: MEINEEAMAAHKRAFLDFLDQDVGKGVYMQAVRDMVQNKRHRLIIGMDDLRNHNLDLARRVIRTPGEYMQPASDAVSEVARNLDPKFLKEGERVMVGFSGPFGFHRVTPRDLMSSFIGTMVCVEGIVTKCSLVRPKVVKSVHFCPVTGDFLSREYRDITSFVGLPTGSVYPTRDDNGNLLVTEYGMCEYKDHQTLSMQEVPENSAPGQLPRTVDVIVEDDLVDCCKPGDRVSIVGVYKALPGKSKGSVSGVFRTVLIANNVSLLNKEANAPVYTREDLKRMKEISRRNDTFDLLGNSLAPSIYGHLWIKKAVVLLMLGGVEKNLKNGTHLRGDINMMMVGDPSVAKSQLLRAVMNIAPLAISTTGRGSSGVGLTAAVTSDQETGERRLEAGAMVLADRGVVCIDEFDKMNDQDRVAIHEVMEQQTVTIAKAGIHASLNARCSVIAAANPIYGTYDRSLTPTKNIGLPDSLLSRFDLLFIVLDQMDPEIDRQISEHVARMHRYCTDDGGARSLDKEGYAEEDDGDANAAIFVKYDRMLHGQDRRRGKKSKQDRLTVKFLKKYIHYAKNLIQPRLTDEASDHIATSYAELRDGSANAKSGGGTLPITARTLETIIRLSTAHAKMKLRHEVLKSDVEAALQVLNFAIYHKELTEMEEREQREMEMKQQADHDAGATGGTVDGHGSSGNDPMDVDVGSNDQNVSAERIEAFEALLGQHVLANHIDQMSIDDIEQMVNRESTAPYTRSQVEFILERMQDANRVMIRDGVVRII.

The region spanning 290–497 is the MCM domain; the sequence is TFDLLGNSLA…IDRQISEHVA (208 aa). 340–347 contributes to the ATP binding site; that stretch reads GDPSVAKS. Positions 472–475 match the Arginine finger motif; it reads SRFD. The span at 661–670 shows a compositional bias: basic and acidic residues; the sequence is EMKQQADHDA. The interval 661–689 is disordered; it reads EMKQQADHDAGATGGTVDGHGSSGNDPMD. Residues 672 to 682 show a composition bias toward gly residues; it reads ATGGTVDGHGS.

Belongs to the MCM family.

The protein localises to the nucleus. It carries out the reaction ATP + H2O = ADP + phosphate + H(+). In terms of biological role, acts as a factor that allows the DNA to undergo a single round of replication per cell cycle. Required for DNA replication and cell proliferation. May act as a component of the MCM complex which is the putative replicative helicase of the replication licensing system in eukaryotic cells. The chain is DNA replication licensing factor MCM3 homolog 2 (ROA2) from Zea mays (Maize).